A 354-amino-acid chain; its full sequence is GTPase Obg (354 aa).

In terms of domain architecture, Obg spans M1–L159. The OBG-type G domain occupies A160–E334. GTP contacts are provided by residues G166–S173, F191–H195, D213–G216, N284–D287, and S315–M317. Residues S173 and T193 each contribute to the Mg(2+) site.

It belongs to the TRAFAC class OBG-HflX-like GTPase superfamily. OBG GTPase family. As to quaternary structure, monomer. Mg(2+) serves as cofactor.

The protein resides in the cytoplasm. An essential GTPase which binds GTP, GDP and possibly (p)ppGpp with moderate affinity, with high nucleotide exchange rates and a fairly low GTP hydrolysis rate. Plays a role in control of the cell cycle, stress response, ribosome biogenesis and in those bacteria that undergo differentiation, in morphogenesis control. The sequence is that of GTPase Obg from Nitrosospira multiformis (strain ATCC 25196 / NCIMB 11849 / C 71).